We begin with the raw amino-acid sequence, 313 residues long: Malate dehydrogenase (313 aa).

NAD(+) is bound by residues 8-13 and Asp-33; that span reads GAGNVG. Arg-83 and Arg-89 together coordinate substrate. NAD(+) contacts are provided by residues Asn-96 and 119-121; that span reads ISN. 2 residues coordinate substrate: Asn-121 and Arg-152. Catalysis depends on His-176, which acts as the Proton acceptor.

The protein belongs to the LDH/MDH superfamily. MDH type 3 family.

It carries out the reaction (S)-malate + NAD(+) = oxaloacetate + NADH + H(+). In terms of biological role, catalyzes the reversible oxidation of malate to oxaloacetate. The protein is Malate dehydrogenase of Bacteroides fragilis (strain ATCC 25285 / DSM 2151 / CCUG 4856 / JCM 11019 / LMG 10263 / NCTC 9343 / Onslow / VPI 2553 / EN-2).